We begin with the raw amino-acid sequence, 177 residues long: ATP-dependent protease subunit HslV (177 aa).

Residue threonine 6 is part of the active site. The Na(+) site is built by glycine 161, cysteine 164, and threonine 167.

It belongs to the peptidase T1B family. HslV subfamily. In terms of assembly, a double ring-shaped homohexamer of HslV is capped on each side by a ring-shaped HslU homohexamer. The assembly of the HslU/HslV complex is dependent on binding of ATP.

The protein localises to the cytoplasm. The enzyme catalyses ATP-dependent cleavage of peptide bonds with broad specificity.. With respect to regulation, allosterically activated by HslU binding. In terms of biological role, protease subunit of a proteasome-like degradation complex believed to be a general protein degrading machinery. The protein is ATP-dependent protease subunit HslV of Petrotoga mobilis (strain DSM 10674 / SJ95).